We begin with the raw amino-acid sequence, 135 residues long: Inner membrane protein YgfX (135 aa).

The Cytoplasmic portion of the chain corresponds to 1-11 (MVLWQSDLRVS). The segment at 1-96 (MVLWQSDLRV…APWMIKSGMM (96 aa)) is not required to inhibit FtsZ or MreB polymerization. A helical membrane pass occupies residues 12–32 (WRAQWLSLLIHGLVAAVILLM). The Periplasmic segment spans residues 33–37 (PWPLS). The helical transmembrane segment at 38–54 (YTPLWMVLLSLVVFDCV) threads the bilayer. Topologically, residues 55 to 135 (RSQRRINARQ…RILLQQETQR (81 aa)) are cytoplasmic.

In terms of assembly, interacts with MreB and FtsZ; interaction with the latter requires FtsZ residues 33-49.

The protein localises to the cell inner membrane. A probable inner membrane protein. Has been shown not to be a toxin, no effects on growth are seen in LB or minimal medium up to 6 or 21 hours (respectively) after induction of expression. Interacts with cytoskeletal proteins FtsZ and MreB; inhibits FtsZ GTP-dependent polymerization as well as MreB ATP-dependent polymerization. Restores production of prodigiosin antibiotic (Pig) in Serratia strains with deletions of sdhE-ygfX; overexpression of this protein and CptB also restores Pig production to a slightly lesser extent in Serratia. This is Inner membrane protein YgfX from Escherichia coli (strain K12).